Here is a 181-residue protein sequence, read N- to C-terminus: TATA-box-binding protein C (181 aa).

Tandem repeats lie at residues 5-83 (IANI…LGML) and 99-177 (VENV…QSKV).

Belongs to the TBP family.

In terms of biological role, general factor that plays a role in the activation of archaeal genes transcribed by RNA polymerase. Binds specifically to the TATA box promoter element which lies close to the position of transcription initiation. This Halobacterium salinarum (strain ATCC 700922 / JCM 11081 / NRC-1) (Halobacterium halobium) protein is TATA-box-binding protein C (tbpC1).